Consider the following 302-residue polypeptide: Glutaminase (302 aa).

Substrate contacts are provided by S61, N111, E155, N162, Y186, Y238, and V256.

Belongs to the glutaminase family. As to quaternary structure, homotetramer.

The enzyme catalyses L-glutamine + H2O = L-glutamate + NH4(+). In Pseudomonas savastanoi pv. phaseolicola (strain 1448A / Race 6) (Pseudomonas syringae pv. phaseolicola (strain 1448A / Race 6)), this protein is Glutaminase.